The following is a 95-amino-acid chain: Neutrophil antibiotic peptide NP-5 (95 aa).

A signal peptide spans 1 to 19 (MRTLALLAAILLVTLQAQA). A propeptide spanning residues 20 to 62 (ELHSGMADDGVDQQQPRAQDLDVAVYIKQDETSPLEVLGAKAG) is cleaved from the precursor. 3 disulfides stabilise this stretch: C65–C93, C67–C82, and C72–C92.

This sequence belongs to the alpha-defensin family.

It is found in the secreted. Its function is as follows. Microbicidal activity. The chain is Neutrophil antibiotic peptide NP-5 from Oryctolagus cuniculus (Rabbit).